Consider the following 165-residue polypeptide: Protein C2-DOMAIN ABA-RELATED 8 (165 aa).

The residue at position 1 (methionine 1) is an N-acetylmethionine. One can recognise a C2 domain in the interval 1–106 (MENLVGLLRI…QGTDIQELTN (106 aa)). Positions 21, 22, 27, 73, 74, 75, and 81 each coordinate Ca(2+).

It belongs to the plant CAR protein family. Binds to PYR/PYL/RCAR abscisic acid intracellular receptors in an ABA-independent manner, both at the plasma membrane and in the nucleus.

The protein resides in the cell membrane. It localises to the nucleus. Stimulates the GTPase/ATPase activities of Obg-like ATPases. Mediates the transient calcium-dependent interaction of PYR/PYL/RCAR abscisic acid (ABA) receptors with the plasma membrane and thus regulates ABA sensitivity. This Arabidopsis thaliana (Mouse-ear cress) protein is Protein C2-DOMAIN ABA-RELATED 8.